Here is a 340-residue protein sequence, read N- to C-terminus: MEF2 transcription factor homolog (340 aa).

Positions 1–61 constitute an MADS-box domain; sequence MGRKKIQITR…NKLFQYASTD (61 aa). Disordered regions lie at residues 90-112, 193-217, 258-283, and 312-340; these read RKEG…TSPV, NQRN…LDFP, LQQR…NGTS, and PNTY…QQLT. Residues 200 to 211 show a composition bias toward low complexity; sequence SSTSVAPSSSSS. Over residues 258–268 the composition is skewed to polar residues; sequence LQQRPVSQPAP. Over residues 269–283 the composition is skewed to low complexity; the sequence is SISNSSTNGISNGTS. Basic and acidic residues predominate over residues 318 to 332; sequence MEPHSPPEKRPRITT.

The protein belongs to the MEF2 family. In terms of assembly, interacts with histone deacetylase hda-4 isoform b.

It is found in the nucleus. In terms of biological role, transcription regulator. Binds specifically to the MEF2 element, 5'-[TC]TA[AT][AT][AT][AT]TA[AG]-3' in the regulatory elements of target genes, such as chemoreceptors str-1 and srh-234. Involved in transduction of sensory signals, together with egl-4, kin-29 and hda-4; binding to histone deacetylase hda-4 enables negative modulation of chemoreceptor gene expression in chemosensory neurons. In response to starvation, negatively modulates expression of chemoreceptor srh-234 in ADL sensory neurons, acting in concert with basic helix-loop-helix (bHLH) transcription factors. Plays a role in regulating muscle sensitivity to acetylcholine (ACh) and the magnitude of presynaptic ACh release via a retrograde signal, perhaps by indirectly decreasing Ras-related protein Rab-3 activity. This chain is MEF2 transcription factor homolog, found in Caenorhabditis elegans.